The following is a 128-amino-acid chain: NADPH-dependent 7-cyano-7-deazaguanine reductase (128 aa).

The active-site Thioimide intermediate is the C34. Residue D41 is the Proton donor of the active site. Substrate contacts are provided by residues 56–58 (VEL) and 75–76 (HE).

Belongs to the GTP cyclohydrolase I family. QueF type 1 subfamily.

Its subcellular location is the cytoplasm. The enzyme catalyses 7-aminomethyl-7-carbaguanine + 2 NADP(+) = 7-cyano-7-deazaguanine + 2 NADPH + 3 H(+). The protein operates within tRNA modification; tRNA-queuosine biosynthesis. Functionally, catalyzes the NADPH-dependent reduction of 7-cyano-7-deazaguanine (preQ0) to 7-aminomethyl-7-deazaguanine (preQ1). This is NADPH-dependent 7-cyano-7-deazaguanine reductase from Thermomicrobium roseum (strain ATCC 27502 / DSM 5159 / P-2).